The sequence spans 257 residues: MILMMVGIVGCGAIANLITGFVRDGRVPVKLGFFYDRDLERAENLASMVDGRAVLDVADMLPEVDLVVEAASPEAVRDLVPEILEAGKDVVVMSVGALMDPELREMLVELASLNDATIHVPSGAIVGLDGLKAASMGNIESVKLITRKPPRSLGISMDEKKVLYRGRASEAVKKFPLNINVAAALSLACDRDVDVEIIADPAVDRNVHEVTVRGDFGEFKTITENVRCSVNPKTSVMAAYSAIKLLKSLSENIHIGT.

NAD(+) contacts are provided by Ala-124 and Asn-180. The active site involves His-208.

The protein belongs to the L-aspartate dehydrogenase family.

It carries out the reaction L-aspartate + NADP(+) + H2O = oxaloacetate + NH4(+) + NADPH + H(+). The catalysed reaction is L-aspartate + NAD(+) + H2O = oxaloacetate + NH4(+) + NADH + H(+). Its pathway is cofactor biosynthesis; NAD(+) biosynthesis; iminoaspartate from L-aspartate (dehydrogenase route): step 1/1. Functionally, specifically catalyzes the NAD or NADP-dependent dehydrogenation of L-aspartate to iminoaspartate. The polypeptide is L-aspartate dehydrogenase (Methanothermobacter thermautotrophicus (strain ATCC 29096 / DSM 1053 / JCM 10044 / NBRC 100330 / Delta H) (Methanobacterium thermoautotrophicum)).